We begin with the raw amino-acid sequence, 148 residues long: Ribosome-binding factor A (148 aa).

The disordered stretch occupies residues Ala120–Ala148. Residues Asp133–Ala148 show a composition bias toward basic and acidic residues.

The protein belongs to the RbfA family. Monomer. Binds 30S ribosomal subunits, but not 50S ribosomal subunits or 70S ribosomes.

The protein localises to the cytoplasm. One of several proteins that assist in the late maturation steps of the functional core of the 30S ribosomal subunit. Associates with free 30S ribosomal subunits (but not with 30S subunits that are part of 70S ribosomes or polysomes). Required for efficient processing of 16S rRNA. May interact with the 5'-terminal helix region of 16S rRNA. This chain is Ribosome-binding factor A, found in Micrococcus luteus (strain ATCC 4698 / DSM 20030 / JCM 1464 / CCM 169 / CCUG 5858 / IAM 1056 / NBRC 3333 / NCIMB 9278 / NCTC 2665 / VKM Ac-2230) (Micrococcus lysodeikticus).